Here is a 146-residue protein sequence, read N- to C-terminus: Protein new-glue 3 (146 aa).

A signal peptide spans 1–23 (MRYSCVLLLLATVACLLIPQTGG). Residues 23-146 (GSTATTTSTS…RRARSARRLS (124 aa)) form a disordered region. The span at 24-66 (STATTTSTSASATTTTSASATTTTASDTTTTTAATTTTSSSSS) shows a compositional bias: low complexity. 4 consecutive repeat copies span residues 31–38 (TSASATTT), 39–46 (TSASATTT), 47–53 (TASDTTT), and 54–61 (TTAATTTT). Residues 31–61 (TSASATTTTSASATTTTASDTTTTTAATTTT) form a 4 X 8 AA approximate tandem repeats of T-S-A-S-A-T-T-T region. Residues 67–92 (KSKKKKRTYHYTRHVYRPKRIRHIYR) show a composition bias toward basic residues. Residues 93 to 106 (HKADDDESSTDRTS) show a composition bias toward basic and acidic residues. The span at 116 to 132 (SSSSSSSGSTSSRSGNS) shows a compositional bias: low complexity. The span at 133-146 (RIRRRRARSARRLS) shows a compositional bias: basic residues.

In terms of tissue distribution, salivary gland specific.

The protein localises to the secreted. The chain is Protein new-glue 3 (ng3) from Drosophila melanogaster (Fruit fly).